The following is a 392-amino-acid chain: Caveolae-associated protein 1 (392 aa).

Residue Met1 is modified to N-acetylmethionine. Over residues 1–10 the composition is skewed to basic and acidic residues; it reads MEDVTLHIVE. The segment at 1–45 is disordered; sequence MEDVTLHIVERPYSGYPDASSEGPEPTPGEARATEEPSGTGSDEL. A required for homotrimerization and for interaction with CAVIN2 and CAVIN3 region spans residues 1–100; the sequence is MEDVTLHIVE…IQGELSKLGK (100 aa). Phosphoserine is present on residues Ser21 and Ser38. The residue at position 40 (Thr40) is a Phosphothreonine. 2 positions are modified to phosphoserine: Ser42 and Ser48. The tract at residues 54–64 is nuclear export signal; sequence VLVLSLLDKII. The interval 55 to 77 is leucine-zipper 1; the sequence is LVLSLLDKIIGAVDQIQLTQAQL. Residue Lys118 forms a Glycyl lysine isopeptide (Lys-Gly) (interchain with G-Cter in SUMO2) linkage. Ser120 carries the phosphoserine modification. Lys124 is covalently cross-linked (Glycyl lysine isopeptide (Lys-Gly) (interchain with G-Cter in SUMO2)). Residues 138-154 are nuclear localization signal; that stretch reads KKLEVNEAELLRRRNFK. Position 158 is a phosphotyrosine (Tyr158). Lys163 participates in a covalent cross-link: Glycyl lysine isopeptide (Lys-Gly) (interchain with G-Cter in SUMO1); alternate. Lys163 is covalently cross-linked (Glycyl lysine isopeptide (Lys-Gly) (interchain with G-Cter in SUMO2); alternate). Lys167 is covalently cross-linked (Glycyl lysine isopeptide (Lys-Gly) (interchain with G-Cter in SUMO2)). The segment at 168-188 is leucine-zipper 2; that stretch reads LSVSKSLKESEALPEKEGDEL. A phosphoserine mark is found at Ser169 and Ser171. Residue Lys172 forms a Glycyl lysine isopeptide (Lys-Gly) (interchain with G-Cter in SUMO2) linkage. Phosphoserine occurs at positions 173 and 177. Basic and acidic residues predominate over residues 173-183; that stretch reads SLKESEALPEK. The segment at 173-198 is disordered; sequence SLKESEALPEKEGDELGEGERPEEDA. Residues 184–198 show a composition bias toward acidic residues; the sequence is EGDELGEGERPEEDA. Positions 201–284 form a coiled coil; the sequence is IELSSDEAVE…RMNKLGTRLV (84 aa). Phosphoserine occurs at positions 204 and 205. A nuclear localization signal region spans residues 235–251; the sequence is KKAFSKEKMEKTKVRTR. The segment at 259–299 is leucine-zipper 3; that stretch reads LKTKENLEKTRHTLEKRMNKLGTRLVPVERREKLKTSRDKL. Residue Ser302 is modified to Phosphoserine. At Thr304 the chain carries Phosphothreonine. Residue Tyr310 is modified to Phosphotyrosine. A Glycyl lysine isopeptide (Lys-Gly) (interchain with G-Cter in SUMO2) cross-link involves residue Lys328. The segment at 347 to 367 is disordered; that stretch reads GPDDDEVGAERGAETDLLRGS. The span at 354–363 shows a compositional bias: basic and acidic residues; sequence GAERGAETDL. 5 positions are modified to phosphoserine: Ser367, Ser368, Ser381, Ser389, and Ser391.

This sequence belongs to the CAVIN family. In terms of assembly, component of the CAVIN complex composed of CAVIN1, CAVIN2, CAVIN3 and CAVIN4. Interacts with RNA polymerase I subunit POLR1A/RPA1 and TTF1. Binds the 3' end of pre-rRNA. Interacts with transcription factor ZNF148. Interacts with LIPE in the adipocyte cytoplasm. Interacts with CAV1, CAV3, CAVIN2, CAVIN3 and CAVIN4. In terms of processing, phosphorylated. Present in active and inactive forms. Changes in phosphorylation pattern may alter activity. Phosphorylation at Tyr-158 is essential for its function in the regulation of ribosomal transcriptional activity. Post-translationally, monoubiquitinated. In terms of tissue distribution, expressed in the adipocyte (at protein level). Expressed in all striated and smooth muscles tested including diaphragm, esophageal striated muscle, fibroblast, endocardial endothelium, epicardial mesothelium, intestinal smooth muscle, masseter, soleus muscle, vascular smooth muscle and white gastrocnemius muscle (at protein level). Expressed in the endothelium and perineural sheath (at protein level). Not expressed in hepatocytes.

It localises to the membrane. The protein resides in the caveola. It is found in the cell membrane. The protein localises to the microsome. Its subcellular location is the endoplasmic reticulum. It localises to the cytoplasm. The protein resides in the cytosol. It is found in the mitochondrion. The protein localises to the nucleus. Functionally, plays an important role in caveolae formation and organization. Essential for the formation of caveolae in all tissues. Core component of the CAVIN complex which is essential for recruitment of the complex to the caveolae in presence of calveolin-1 (CAV1). Essential for normal oligomerization of CAV1. Promotes ribosomal transcriptional activity in response to metabolic challenges in the adipocytes and plays an important role in the formation of the ribosomal transcriptional loop. Dissociates transcription complexes paused by DNA-bound TTF1, thereby releasing both RNA polymerase I and pre-RNA from the template. The caveolae biogenesis pathway is required for the secretion of proteins such as GASK1A. This chain is Caveolae-associated protein 1, found in Rattus norvegicus (Rat).